Consider the following 1019-residue polypeptide: StAR-related lipid transfer protein 8 (1019 aa).

Disordered regions lie at residues 92-122 (QPLL…KVKK) and 134-154 (SLRR…CLAT). The span at 100 to 115 (SPSNQPFLSPPQGQEG) shows a compositional bias: polar residues. Ser108 carries the phosphoserine modification. Over residues 134–147 (SLRRKEKGDSRQTE) the composition is skewed to basic and acidic residues. Arg168 is modified (asymmetric dimethylarginine). 2 positions are modified to phosphoserine: Ser234 and Ser237. Disordered stretches follow at residues 325–355 (MYPD…EVAT) and 406–482 (APAQ…VGAS). Positions 334-347 (KEEEEEEEEEEEEA) are enriched in acidic residues. Polar residues-rich tracts occupy residues 418–430 (NSTA…SSLS) and 437–455 (ISDT…NSMN). Residues Ser494 and Ser502 each carry the phosphoserine modification. The Rho-GAP domain occupies 569 to 773 (PPLIHVQRTG…HMISDCKKLF (205 aa)). A disordered region spans residues 731–754 (DSSSPRIKSKRSLVGRPGPRDLSE). One can recognise an START domain in the interval 805–1013 (AQAAGVSLSL…RDSFPTLQAA (209 aa)).

As to quaternary structure, binds both the SH2 and PTB domains of TNS1.

The protein resides in the cell junction. The protein localises to the focal adhesion. Functionally, accelerates GTPase activity of RHOA and CDC42, but not RAC1. Stimulates the hydrolysis of phosphatidylinositol 4,5-bisphosphate by PLCD1. This Mus musculus (Mouse) protein is StAR-related lipid transfer protein 8 (Stard8).